The following is a 139-amino-acid chain: Asp-hemolysin (139 aa).

The propeptide occupies 1–5 (MASVQ). Positions 47–79 (TSEDVQQKTAPPGGSVNVNSCGRSDASSGTTGG) are disordered. Positions 62 to 75 (VNVNSCGRSDASSG) are enriched in polar residues.

The protein belongs to the aegerolysin family.

This Aspergillus fumigatus (strain ATCC MYA-4609 / CBS 101355 / FGSC A1100 / Af293) (Neosartorya fumigata) protein is Asp-hemolysin.